The primary structure comprises 392 residues: Streptogrisin-D (392 aa).

An N-terminal signal peptide occupies residues 1-64; it reads MCVSRRRNSG…AGFTFQTANA (64 aa). Positions 65 to 204 are excised as a propeptide; sequence SDDVPAFGAK…NRTAGEFTPL (140 aa). Cysteines 218 and 238 form a disulfide. Active-site charge relay system residues include H237, D266, and S348. A disulfide bridge connects residues C342 and C369.

The protein belongs to the peptidase S1 family. Homodimer.

In terms of biological role, has a primary specificity for large aliphatic or aromatic amino acids. This is Streptogrisin-D (sprD) from Streptomyces griseus.